The sequence spans 180 residues: Ribosome rescue factor SmrB (180 aa).

The Smr domain maps to 98 to 173; the sequence is LDLHGLTQLQ…GNAALLVLVA (76 aa).

Belongs to the SmrB family. Associates with collided ribosomes, but not with correctly translating polysomes.

In terms of biological role, acts as a ribosome collision sensor. Detects stalled/collided disomes (pairs of ribosomes where the leading ribosome is stalled and a second ribosome has collided with it) and endonucleolytically cleaves mRNA at the 5' boundary of the stalled ribosome. Stalled/collided disomes form a new interface (primarily via the 30S subunits) that binds SmrB. Cleaved mRNA becomes available for tmRNA ligation, leading to ribosomal subunit dissociation and rescue of stalled ribosomes. This chain is Ribosome rescue factor SmrB, found in Pectobacterium atrosepticum (strain SCRI 1043 / ATCC BAA-672) (Erwinia carotovora subsp. atroseptica).